Reading from the N-terminus, the 767-residue chain is MTEKITPEVVAQHGLTQAEYDEVKRHLGREPNLTELGVFSVMWSEHCSYKSSRVHLKTFPTSGPRVLQGPGENAGVVDLGDGLAAAFKMESHNHPSYIEPYQGAATGVGGILRDVFTMGARPIASANSLRFGDPSHPKTAYLLEGVVAGIGGYGNCMGVPTVAGEVMFHPSYNGNCLVNAFTLGILPADKIFLGTAAGVGNPVMYIGAKTGRDGIHGATMASAEFDASTEEKRPTVQVGDPFMEKLLLEACLELFKTDAVVGIQDMGAAGFTSSSVEMAGRAGNGLDLFLDQVPLREEGMTPYEILLSESQERMLLVAAEGKEDMVRKICTKWDLDVAIVGRVTGTGRWRAHWHGKVVADLPVDPLTEGAPKYQRPMTPHPALPALHAFDLSTVPEPADLGDTLLRLLARPTIASKEWVYQQYDHMVRLVGAVRPGGDAAVVRIATGDERHAGKGIAISVGANGRYCFLDPHLGAQHAVAECARNIACVGGEPIAVTDCLNFGNPEKPEIMWQFAECVRGIGDACRALGTPVVSGNVSLYNETEGQGILPTPTIGMVGLLPDVEKTCTSAFKNAGDVIALVGTLQGEVGGSEYLSAEHGREAGHPPALDLAKEKAVQETVRRAVREGLLSSAHDCSDGGLAVALAECCMMHGVPAGAEKAPWIGAAVRVPFPARKDFVLFGEDASRILVSMPKESAARFVALAQECGAPVIRLGAVGGDTLEIQGALSVPVAELAKAWRDGVPAVLRRDVGHAAASGIAREPQEPLP.

His46 is an active-site residue. 2 residues coordinate ATP: Tyr49 and Lys88. Residue Glu90 participates in Mg(2+) binding. Substrate is bound by residues 91-94 (SHNH) and Arg113. His92 serves as the catalytic Proton acceptor. Mg(2+) is bound at residue Asp114. Substrate is bound at residue Gln237. Asp265 contributes to the Mg(2+) binding site. 309-311 (ESQ) serves as a coordination point for substrate. Residues Asp498 and Gly535 each contribute to the ATP site. Mg(2+) is bound at residue Asn536. Ser538 serves as a coordination point for substrate.

It belongs to the FGAMS family. As to quaternary structure, monomer. Part of the FGAM synthase complex composed of 1 PurL, 1 PurQ and 2 PurS subunits.

The protein localises to the cytoplasm. It catalyses the reaction N(2)-formyl-N(1)-(5-phospho-beta-D-ribosyl)glycinamide + L-glutamine + ATP + H2O = 2-formamido-N(1)-(5-O-phospho-beta-D-ribosyl)acetamidine + L-glutamate + ADP + phosphate + H(+). The protein operates within purine metabolism; IMP biosynthesis via de novo pathway; 5-amino-1-(5-phospho-D-ribosyl)imidazole from N(2)-formyl-N(1)-(5-phospho-D-ribosyl)glycinamide: step 1/2. Functionally, part of the phosphoribosylformylglycinamidine synthase complex involved in the purines biosynthetic pathway. Catalyzes the ATP-dependent conversion of formylglycinamide ribonucleotide (FGAR) and glutamine to yield formylglycinamidine ribonucleotide (FGAM) and glutamate. The FGAM synthase complex is composed of three subunits. PurQ produces an ammonia molecule by converting glutamine to glutamate. PurL transfers the ammonia molecule to FGAR to form FGAM in an ATP-dependent manner. PurS interacts with PurQ and PurL and is thought to assist in the transfer of the ammonia molecule from PurQ to PurL. The sequence is that of Phosphoribosylformylglycinamidine synthase subunit PurL from Anaeromyxobacter sp. (strain Fw109-5).